The primary structure comprises 135 residues: MSKLNKTILADFEAAQIQRKLPEFNQGDTVVVNVKVKEGNRERVQAYEGVVIGTKNAGLNSSFTVRKISHGFGVERVFQTHSAIIDSVEVKRRGKVRAGKLYYLRGLEGKAARIKEDLAAAAQAKAARQAAAKVE.

Belongs to the bacterial ribosomal protein bL19 family.

Its function is as follows. This protein is located at the 30S-50S ribosomal subunit interface and may play a role in the structure and function of the aminoacyl-tRNA binding site. In Xanthomonas euvesicatoria pv. vesicatoria (strain 85-10) (Xanthomonas campestris pv. vesicatoria), this protein is Large ribosomal subunit protein bL19.